Consider the following 332-residue polypeptide: Glycerol-3-phosphate dehydrogenase [NAD(P)+] (332 aa).

Residues S10, W11, K31, and K105 each contribute to the NADPH site. The sn-glycerol 3-phosphate site is built by K105, G136, and S138. A140 provides a ligand contact to NADPH. Positions 191, 244, 254, 255, and 256 each coordinate sn-glycerol 3-phosphate. The active-site Proton acceptor is K191. R255 is a binding site for NADPH. 2 residues coordinate NADPH: V279 and E281.

This sequence belongs to the NAD-dependent glycerol-3-phosphate dehydrogenase family.

Its subcellular location is the cytoplasm. The catalysed reaction is sn-glycerol 3-phosphate + NAD(+) = dihydroxyacetone phosphate + NADH + H(+). It carries out the reaction sn-glycerol 3-phosphate + NADP(+) = dihydroxyacetone phosphate + NADPH + H(+). It participates in membrane lipid metabolism; glycerophospholipid metabolism. Functionally, catalyzes the reduction of the glycolytic intermediate dihydroxyacetone phosphate (DHAP) to sn-glycerol 3-phosphate (G3P), the key precursor for phospholipid synthesis. This is Glycerol-3-phosphate dehydrogenase [NAD(P)+] from Anaeromyxobacter dehalogenans (strain 2CP-C).